The following is a 476-amino-acid chain: Doublesex and mab-3 related transcription factor 3 (476 aa).

A DNA-binding region (DM) is located at residues 29-76 (CARCRNHGVLSWLKGHKRYCRFKDCTCEKCILIIERQRVMAAQVALRR). 2 disordered regions span residues 89 to 130 (DSLR…RPAT) and 147 to 195 (GTLP…SKNC). Residues 102 to 121 (DAAATAATASQSSPASQASQ) show a composition bias toward low complexity. Over residues 176–185 (FSDKDTDQRS) the composition is skewed to basic and acidic residues. The 36-residue stretch at 255-290 (RPPLEVLKKIFPNQKPTVLELILKGCGGDLVSAVEV) folds into the DMA domain. The span at 418-432 (NSTSVFRSSPVLSSR) shows a compositional bias: polar residues. Positions 418-476 (NSTSVFRSSPVLSSRTTEDPRISIPDDGCPIVAKQSIYTEDDYDERSDSSDSRILNTSS) are disordered.

Belongs to the DMRT family.

It is found in the nucleus. Its function is as follows. Probable transcription factor that plays a role in configuring the spinal circuits controlling stride in vertebrates. Involved in neuronal specification within a specific subdivision of spinal cord neurons and in the development of a coordinated locomotor network controlling limb movements. May regulate transcription during sexual development. The polypeptide is Doublesex and mab-3 related transcription factor 3 (Dmrt3) (Rattus norvegicus (Rat)).